Consider the following 161-residue polypeptide: EP300-interacting inhibitor of differentiation 2B (161 aa).

2 disordered regions span residues 1 to 26 and 54 to 77; these read MAEP…GTAS and ARSM…GLAS.

As to quaternary structure, homodimer and heterodimer with EID2. Interacts with HDAC1 and HDAC2.

The protein localises to the nucleus. In terms of biological role, acts as a repressor of MYOD-dependent transcription, glucocorticoid receptor-dependent transcription, and muscle differentiation. This chain is EP300-interacting inhibitor of differentiation 2B, found in Homo sapiens (Human).